A 494-amino-acid polypeptide reads, in one-letter code: Probable cytosol aminopeptidase (494 aa).

Residues K260 and D265 each contribute to the Mn(2+) site. The active site involves K272. Positions 283, 342, and 344 each coordinate Mn(2+). R346 is a catalytic residue.

It belongs to the peptidase M17 family. It depends on Mn(2+) as a cofactor.

The protein localises to the cytoplasm. The enzyme catalyses Release of an N-terminal amino acid, Xaa-|-Yaa-, in which Xaa is preferably Leu, but may be other amino acids including Pro although not Arg or Lys, and Yaa may be Pro. Amino acid amides and methyl esters are also readily hydrolyzed, but rates on arylamides are exceedingly low.. The catalysed reaction is Release of an N-terminal amino acid, preferentially leucine, but not glutamic or aspartic acids.. In terms of biological role, presumably involved in the processing and regular turnover of intracellular proteins. Catalyzes the removal of unsubstituted N-terminal amino acids from various peptides. This is Probable cytosol aminopeptidase from Bacillus anthracis (strain CDC 684 / NRRL 3495).